Consider the following 236-residue polypeptide: Transcriptional regulatory protein RprY (236 aa).

Positions arginine 9–leucine 123 constitute a Response regulatory domain. At aspartate 58 the chain carries 4-aspartylphosphate. Residues serine 134–threonine 231 constitute a DNA-binding region (ompR/PhoB-type).

In terms of processing, phosphorylated by RprX.

The protein localises to the cytoplasm. Member of the two-component regulatory system RprX/RprY. The polypeptide is Transcriptional regulatory protein RprY (rprY) (Bacteroides fragilis (strain YCH46)).